The sequence spans 370 residues: Chorismate synthase (370 aa).

R48 serves as a coordination point for NADP(+). Residues 125–127, 241–242, G285, 300–304, and R326 each bind FMN; these read RSS, NA, and KPTSS.

The protein belongs to the chorismate synthase family. As to quaternary structure, homotetramer. It depends on FMNH2 as a cofactor.

It carries out the reaction 5-O-(1-carboxyvinyl)-3-phosphoshikimate = chorismate + phosphate. Its pathway is metabolic intermediate biosynthesis; chorismate biosynthesis; chorismate from D-erythrose 4-phosphate and phosphoenolpyruvate: step 7/7. In terms of biological role, catalyzes the anti-1,4-elimination of the C-3 phosphate and the C-6 proR hydrogen from 5-enolpyruvylshikimate-3-phosphate (EPSP) to yield chorismate, which is the branch point compound that serves as the starting substrate for the three terminal pathways of aromatic amino acid biosynthesis. This reaction introduces a second double bond into the aromatic ring system. This Jannaschia sp. (strain CCS1) protein is Chorismate synthase.